We begin with the raw amino-acid sequence, 105 residues long: Replication initiation control protein YabA (105 aa).

Zn(2+)-binding residues include histidine 79, cysteine 81, cysteine 95, and cysteine 98.

It belongs to the YabA family. As to quaternary structure, homotetramer. Interacts with both DnaA and DnaN, acting as a bridge between these two proteins. Zn(2+) is required as a cofactor.

The protein resides in the cytoplasm. The protein localises to the nucleoid. Involved in control of chromosome replication initiation. Inhibits the cooperative binding of DnaA to the oriC region, thus negatively regulating initiation of chromosome replication. Inhibits the ability of DnaA-ATP to form a helix on DNA; does not disassemble preformed DnaA-DNA helices. Decreases the residence time of DnaA on the chromosome at its binding sites (oriC, replication forks and promoter-binding sites). Tethers DnaA to the replication machinery via the DNA polymerase beta sliding clamp subunit (dnaN). Associates with oriC and other DnaA targets on the chromosome in a DnaA-dependent manner. The chain is Replication initiation control protein YabA from Streptococcus sanguinis (strain SK36).